A 447-amino-acid polypeptide reads, in one-letter code: Adenylosuccinate synthetase (447 aa).

GTP-binding positions include Gly12–Lys18 and Gly40–Thr42. Asp13 (proton acceptor) is an active-site residue. Residues Asp13 and Gly40 each coordinate Mg(2+). Residues Asp13 to Lys16, Asn38 to His41, Thr128, Arg142, Gln223, Thr238, and Arg302 each bind IMP. His41 functions as the Proton donor in the catalytic mechanism. Substrate is bound at residue Thr298–Arg304. Residues Arg304, Lys330 to Asp332, and Ser412 to Gly414 contribute to the GTP site.

Belongs to the adenylosuccinate synthetase family. Homodimer. Mg(2+) is required as a cofactor.

It is found in the cytoplasm. It catalyses the reaction IMP + L-aspartate + GTP = N(6)-(1,2-dicarboxyethyl)-AMP + GDP + phosphate + 2 H(+). The protein operates within purine metabolism; AMP biosynthesis via de novo pathway; AMP from IMP: step 1/2. In terms of biological role, plays an important role in the de novo pathway of purine nucleotide biosynthesis. Catalyzes the first committed step in the biosynthesis of AMP from IMP. The sequence is that of Adenylosuccinate synthetase from Trichormus variabilis (strain ATCC 29413 / PCC 7937) (Anabaena variabilis).